The chain runs to 225 residues: 7-cyano-7-deazaguanine synthase (225 aa).

Y9–L19 contributes to the ATP binding site. 4 residues coordinate Zn(2+): C188, C198, C201, and C204.

It belongs to the QueC family. Zn(2+) is required as a cofactor.

It catalyses the reaction 7-carboxy-7-deazaguanine + NH4(+) + ATP = 7-cyano-7-deazaguanine + ADP + phosphate + H2O + H(+). The protein operates within purine metabolism; 7-cyano-7-deazaguanine biosynthesis. Its function is as follows. Catalyzes the ATP-dependent conversion of 7-carboxy-7-deazaguanine (CDG) to 7-cyano-7-deazaguanine (preQ(0)). The protein is 7-cyano-7-deazaguanine synthase of Geobacter sp. (strain M21).